Consider the following 312-residue polypeptide: Ribonuclease HIII (312 aa).

One can recognise an RNase H type-2 domain in the interval 95 to 311; sequence FNCIGSDEAG…REKAQKILKP (217 aa). Positions 101, 102, and 206 each coordinate a divalent metal cation.

It belongs to the RNase HII family. RnhC subfamily. Mn(2+) serves as cofactor. It depends on Mg(2+) as a cofactor.

Its subcellular location is the cytoplasm. It catalyses the reaction Endonucleolytic cleavage to 5'-phosphomonoester.. Endonuclease that specifically degrades the RNA of RNA-DNA hybrids. The polypeptide is Ribonuclease HIII (Staphylococcus aureus (strain MSSA476)).